Consider the following 265-residue polypeptide: Phosphate import ATP-binding protein PstB (265 aa).

An ABC transporter domain is found at 18–260; sequence IAAKGVNVYY…PEDPRTESYI (243 aa). 50 to 57 lines the ATP pocket; it reads GPSGCGKS.

This sequence belongs to the ABC transporter superfamily. Phosphate importer (TC 3.A.1.7) family. In terms of assembly, the complex is composed of two ATP-binding proteins (PstB), two transmembrane proteins (PstC and PstA) and a solute-binding protein (PstS).

It localises to the cell inner membrane. The catalysed reaction is phosphate(out) + ATP + H2O = ADP + 2 phosphate(in) + H(+). Part of the ABC transporter complex PstSACB involved in phosphate import. Responsible for energy coupling to the transport system. This Ruegeria sp. (strain TM1040) (Silicibacter sp.) protein is Phosphate import ATP-binding protein PstB.